The sequence spans 382 residues: MARDYYGLLGVSKNASDADIKRAYRKLARELHPDVNPDEAAQAKFKEISVAYEVLSDPDKRRIVDLGGDPLESAAAGGNGFGGFGGLGDVFEAFFGGGFGGGAASRGPIGRVRPGSDSLLRMRLDLEECATGVTKQVTVDTAVLCDRCQGKGTNGDSVPIPCDTCGGRGEVQTVQRSLLGQMLTSRPCPTCRGVGVVIPDPCQQCMGDGRIRARREISVKIPAGVGDGMRVRLAAQGEVGPGGGPAGDLYVEVHEQAHDVFVREGDHLHCTVSVPMVDAALGVTVTVDAILDGLSEITIPPGTQPGSVITLRGRGMPHLRSNTRGDLHVHVEVVVPTRLDHQDIELLRELKGRRDREVAEVRSTHAAAGGLFSRLRETFTGR.

The J domain maps to 4-68 (DYYGLLGVSK…DKRRIVDLGG (65 aa)). Residues 132-214 (GVTKQVTVDT…CMGDGRIRAR (83 aa)) form a CR-type zinc finger. Zn(2+) contacts are provided by Cys145, Cys148, Cys162, Cys165, Cys188, Cys191, Cys202, and Cys205. CXXCXGXG motif repeat units follow at residues 145 to 152 (CDRCQGKG), 162 to 169 (CDTCGGRG), 188 to 195 (CPTCRGVG), and 202 to 209 (CQQCMGDG).

Belongs to the DnaJ family. In terms of assembly, homodimer. Interacts with RNase J. The cofactor is Zn(2+).

It is found in the cytoplasm. Participates actively in the response to hyperosmotic and heat shock by preventing the aggregation of stress-denatured proteins and by disaggregating proteins, also in an autonomous, DnaK-independent fashion. Unfolded proteins bind initially to DnaJ; upon interaction with the DnaJ-bound protein, DnaK hydrolyzes its bound ATP, resulting in the formation of a stable complex. GrpE releases ADP from DnaK; ATP binding to DnaK triggers the release of the substrate protein, thus completing the reaction cycle. Several rounds of ATP-dependent interactions between DnaJ, DnaK and GrpE are required for fully efficient folding. Also involved, together with DnaK and GrpE, in the DNA replication of plasmids through activation of initiation proteins. Inhibits the beta-lactamase and RNase activity of RNase J. The chain is Chaperone protein DnaJ 2 from Mycobacterium tuberculosis (strain ATCC 25618 / H37Rv).